The following is a 312-amino-acid chain: Ribosomal protein L11 methyltransferase (312 aa).

Threonine 159, glycine 180, aspartate 201, and asparagine 244 together coordinate S-adenosyl-L-methionine.

This sequence belongs to the methyltransferase superfamily. PrmA family.

Its subcellular location is the cytoplasm. The enzyme catalyses L-lysyl-[protein] + 3 S-adenosyl-L-methionine = N(6),N(6),N(6)-trimethyl-L-lysyl-[protein] + 3 S-adenosyl-L-homocysteine + 3 H(+). In terms of biological role, methylates ribosomal protein L11. This chain is Ribosomal protein L11 methyltransferase, found in Desulfitobacterium hafniense (strain DSM 10664 / DCB-2).